Consider the following 58-residue polypeptide: ATP synthase F(0) complex subunit k, mitochondrial (58 aa).

N6-acetyllysine occurs at positions 16 and 17. A helical transmembrane segment spans residues 23-45 (TLTGRMNCVLATYGSIALIVLYF).

In terms of assembly, component of the ATP synthase complex composed at least of ATP5F1A/subunit alpha, ATP5F1B/subunit beta, ATP5MC1/subunit c (homooctomer), MT-ATP6/subunit a, MT-ATP8/subunit 8, ATP5ME/subunit e, ATP5MF/subunit f, ATP5MG/subunit g, ATP5MK/subunit k, ATP5MJ/subunit j, ATP5F1C/subunit gamma, ATP5F1D/subunit delta, ATP5F1E/subunit epsilon, ATP5PF/subunit F6, ATP5PB/subunit b, ATP5PD/subunit d, ATP5PO/subunit OSCP. ATP synthase complex consists of a soluble F(1) head domain (subunits alpha(3) and beta(3)) - the catalytic core - and a membrane F(0) domain - the membrane proton channel (subunits c, a, 8, e, f, g, k and j). These two domains are linked by a central stalk (subunits gamma, delta, and epsilon) rotating inside the F1 region and a stationary peripheral stalk (subunits F6, b, d, and OSCP). The ATP synthase complex/complex V exists as a monomeric and a dimeric supercomplex that helps shape mitochondrial cristae to optimize proton flow.

Its subcellular location is the mitochondrion membrane. In terms of biological role, subunit k, of the mitochondrial membrane ATP synthase complex (F(1)F(0) ATP synthase or Complex V) that produces ATP from ADP in the presence of a proton gradient across the membrane which is generated by electron transport complexes of the respiratory chain. ATP synthase complex consist of a soluble F(1) head domain - the catalytic core - and a membrane F(1) domain - the membrane proton channel. These two domains are linked by a central stalk rotating inside the F(1) region and a stationary peripheral stalk. During catalysis, ATP synthesis in the catalytic domain of F(1) is coupled via a rotary mechanism of the central stalk subunits to proton translocation. In vivo, can only synthesize ATP although its ATP hydrolase activity can be activated artificially in vitro. Part of the complex F(0) domain. Required for dimerization of the ATP synthase complex and as such regulates ATP synthesis in the mitochondria. This Homo sapiens (Human) protein is ATP synthase F(0) complex subunit k, mitochondrial.